Reading from the N-terminus, the 114-residue chain is Probable 4-amino-4-deoxy-L-arabinose-phosphoundecaprenol flippase subunit ArnE (114 aa).

The next 3 membrane-spanning stretches (helical) occupy residues 38 to 58 (LTLR…LLWL), 64 to 84 (LPLS…TLAA), and 94 to 114 (LRHW…SWHL). Positions 43 to 112 (LAIAVVSLGL…IMFGILLMSW (70 aa)) constitute an EamA domain.

It belongs to the ArnE family. In terms of assembly, heterodimer of ArnE and ArnF.

It localises to the cell inner membrane. Its pathway is bacterial outer membrane biogenesis; lipopolysaccharide biosynthesis. Translocates 4-amino-4-deoxy-L-arabinose-phosphoundecaprenol (alpha-L-Ara4N-phosphoundecaprenol) from the cytoplasmic to the periplasmic side of the inner membrane. This chain is Probable 4-amino-4-deoxy-L-arabinose-phosphoundecaprenol flippase subunit ArnE, found in Yersinia pseudotuberculosis serotype O:3 (strain YPIII).